We begin with the raw amino-acid sequence, 129 residues long: UPF0047 protein Mb2586c (129 aa).

Belongs to the UPF0047 family.

In Mycobacterium bovis (strain ATCC BAA-935 / AF2122/97), this protein is UPF0047 protein Mb2586c.